The chain runs to 381 residues: Chymosin (381 aa).

An N-terminal signal peptide occupies residues 1–16; sequence MRCLVVLLAVFALSQG. Positions 17 to 58 are cleaved as a propeptide — activation peptide; sequence AEITRIPLYKGKPLRKALKERGLLEDFLQKQQYGVSSEYSGF. The Peptidase A1 domain maps to 74–378; the sequence is YFGKIYLGTP…DRANNLVGLA (305 aa). Aspartate 92 is an active-site residue. Intrachain disulfides connect cysteine 105-cysteine 110 and cysteine 265-cysteine 269. Aspartate 274 is an active-site residue. The cysteines at positions 308 and 341 are disulfide-linked.

The protein belongs to the peptidase A1 family. As to quaternary structure, monomer.

It catalyses the reaction Broad specificity similar to that of pepsin A. Clots milk by cleavage of a single 104-Ser-Phe-|-Met-Ala-107 bond in kappa-chain of casein.. Functionally, chymosin is synthesized in the mucosa of the stomach. The enzyme hydrolyzes casein to paracasein. In Ovis aries (Sheep), this protein is Chymosin (CYM).